Consider the following 119-residue polypeptide: Large ribosomal subunit protein bL20 (119 aa).

It belongs to the bacterial ribosomal protein bL20 family.

Functionally, binds directly to 23S ribosomal RNA and is necessary for the in vitro assembly process of the 50S ribosomal subunit. It is not involved in the protein synthesizing functions of that subunit. This chain is Large ribosomal subunit protein bL20, found in Coxiella burnetii (strain CbuK_Q154) (Coxiella burnetii (strain Q154)).